The primary structure comprises 164 residues: V-type proton ATPase subunit c' (164 aa).

Residues 1–16 are Lumenal-facing; it reads MDMVASDNVYAPLYAP. Residues 17 to 37 form a helical membrane-spanning segment; that stretch reads FFGFAGCALAMILSCLGAAIG. The Cytoplasmic segment spans residues 38–59; that stretch reads TAKSGIGIAGIGTFKPELIMKS. A helical membrane pass occupies residues 60–80; that stretch reads LIPVVMSGILAIYGLVVAVLI. The Lumenal portion of the chain corresponds to 81 to 98; the sequence is AGNLSPTEEYTLFNGFMH. A helical membrane pass occupies residues 99–119; sequence LSCGLCVGFACLSSGYAIGIV. The Cytoplasmic segment spans residues 120–136; it reads GDVGVRKYMHQPRLFVG. A helical transmembrane segment spans residues 137–157; the sequence is IVLILIFSEVLGLYGMIIALI. Residues 158–164 are Lumenal-facing; it reads LNTKGSE.

Belongs to the V-ATPase proteolipid subunit family. In terms of assembly, V-ATPase is a heteromultimeric enzyme composed of a peripheral catalytic V1 complex (components A to H) attached to an integral membrane V0 proton pore complex (components: a, c, c', c'', d, e, f and VOA1). The decameric c-ring forms the proton-conducting pore, and is composed of eight proteolipid subunits c, one subunit c' and one subunit c''.

It localises to the vacuole membrane. Proton-conducting pore forming subunit of the V0 complex of vacuolar(H+)-ATPase (V-ATPase), a multisubunit enzyme composed of a peripheral complex (V1) that hydrolyzes ATP and a membrane integral complex (V0) that translocates protons. V-ATPase is responsible for acidifying and maintaining the pH of intracellular compartments. In Candida glabrata (strain ATCC 2001 / BCRC 20586 / JCM 3761 / NBRC 0622 / NRRL Y-65 / CBS 138) (Yeast), this protein is V-type proton ATPase subunit c' (VMA11).